A 483-amino-acid polypeptide reads, in one-letter code: ATP-dependent RNA helicase dbp-5 (483 aa).

The interval 1–47 (MADLASRITKPDEAPAAAPEAAPVSAPASEEPKAPENETSIEESQSN) is disordered. Low complexity predominate over residues 14 to 29 (APAAAPEAAPVSAPAS). Residues 74–102 (SSFDELGLPEAVNRGLLAINFKKPSKVQE) carry the Q motif motif. One can recognise a Helicase ATP-binding domain in the interval 107 to 276 (LMLSDPPRNM…ERFAPNANQM (170 aa)). Residue 120 to 127 (SQSGTGKT) participates in ATP binding. A DEAD box motif is present at residues 223–226 (DEAD). A Helicase C-terminal domain is found at 304–455 (ILCKLYGLMT…LIQLNPNDLD (152 aa)).

The protein belongs to the DEAD box helicase family. DDX19/DBP5 subfamily. Associates with the nuclear pore complex.

The protein resides in the cytoplasm. The protein localises to the nucleus. It is found in the nuclear pore complex. Its subcellular location is the nucleus membrane. It catalyses the reaction ATP + H2O = ADP + phosphate + H(+). Functionally, ATP-dependent RNA helicase associated with the nuclear pore complex and essential for mRNA export from the nucleus. May participate in a terminal step of mRNA export through the removal of proteins that accompany mRNA through the nucleopore complex. May also be involved in early transcription. The protein is ATP-dependent RNA helicase dbp-5 (dbp-5) of Neurospora crassa (strain ATCC 24698 / 74-OR23-1A / CBS 708.71 / DSM 1257 / FGSC 987).